The primary structure comprises 220 residues: Small ribosomal subunit protein uS2 (220 aa).

Belongs to the universal ribosomal protein uS2 family.

The chain is Small ribosomal subunit protein uS2 from Methanococcus maripaludis (strain DSM 14266 / JCM 13030 / NBRC 101832 / S2 / LL).